The primary structure comprises 82 residues: Sec-independent protein translocase protein TatA (82 aa).

Residues 1-21 form a helical membrane-spanning segment; the sequence is MGSFSIWHWLIVLLIVVMVFG. Positions 46–82 are disordered; it reads GASTDDSATTSAPAGQVTNNSTAADKTTIDVEAKHKS. The segment covering 49 to 70 has biased composition (polar residues); the sequence is TDDSATTSAPAGQVTNNSTAAD. Residues 72-82 show a composition bias toward basic and acidic residues; the sequence is TTIDVEAKHKS.

It belongs to the TatA/E family. In terms of assembly, the Tat system comprises two distinct complexes: a TatABC complex, containing multiple copies of TatA, TatB and TatC subunits, and a separate TatA complex, containing only TatA subunits. Substrates initially bind to the TatABC complex, which probably triggers association of the separate TatA complex to form the active translocon.

It is found in the cell inner membrane. Functionally, part of the twin-arginine translocation (Tat) system that transports large folded proteins containing a characteristic twin-arginine motif in their signal peptide across membranes. TatA could form the protein-conducting channel of the Tat system. The protein is Sec-independent protein translocase protein TatA of Acidovorax sp. (strain JS42).